A 412-amino-acid polypeptide reads, in one-letter code: 1-deoxy-D-xylulose 5-phosphate reductoisomerase (412 aa).

Thr-10, Gly-11, Ser-12, Ile-13, Gly-36, Lys-37, Asn-38, and Asn-130 together coordinate NADPH. A 1-deoxy-D-xylulose 5-phosphate-binding site is contributed by Lys-131. Glu-132 serves as a coordination point for NADPH. Residue Asp-156 participates in Mn(2+) binding. 1-deoxy-D-xylulose 5-phosphate is bound by residues Ser-157, Glu-158, Ser-194, and His-217. Residue Glu-158 coordinates Mn(2+). Position 223 (Gly-223) interacts with NADPH. 1-deoxy-D-xylulose 5-phosphate-binding residues include Ser-230, Asn-235, Lys-236, and Glu-239. Residue Glu-239 participates in Mn(2+) binding.

Belongs to the DXR family. The cofactor is Mg(2+). It depends on Mn(2+) as a cofactor.

It catalyses the reaction 2-C-methyl-D-erythritol 4-phosphate + NADP(+) = 1-deoxy-D-xylulose 5-phosphate + NADPH + H(+). Its pathway is isoprenoid biosynthesis; isopentenyl diphosphate biosynthesis via DXP pathway; isopentenyl diphosphate from 1-deoxy-D-xylulose 5-phosphate: step 1/6. Catalyzes the NADPH-dependent rearrangement and reduction of 1-deoxy-D-xylulose-5-phosphate (DXP) to 2-C-methyl-D-erythritol 4-phosphate (MEP). The protein is 1-deoxy-D-xylulose 5-phosphate reductoisomerase of Prochlorococcus marinus (strain NATL1A).